The chain runs to 812 residues: Valine--tRNA ligase (812 aa).

The short motif at 47–57 (PTISGQLHIGH) is the 'HIGH' region element. Residues 536–540 (KMSKS) carry the 'KMSKS' region motif. K539 lines the ATP pocket.

Belongs to the class-I aminoacyl-tRNA synthetase family. ValS type 2 subfamily. As to quaternary structure, monomer.

The protein localises to the cytoplasm. It carries out the reaction tRNA(Val) + L-valine + ATP = L-valyl-tRNA(Val) + AMP + diphosphate. Its function is as follows. Catalyzes the attachment of valine to tRNA(Val). As ValRS can inadvertently accommodate and process structurally similar amino acids such as threonine, to avoid such errors, it has a 'posttransfer' editing activity that hydrolyzes mischarged Thr-tRNA(Val) in a tRNA-dependent manner. This chain is Valine--tRNA ligase, found in Ehrlichia ruminantium (strain Gardel).